The primary structure comprises 328 residues: Gonadotropin-releasing hormone receptor (328 aa).

The Extracellular portion of the chain corresponds to 1–38; sequence MANSASPEQNQNHCSASNSSIPLTQANLPTLTLSGKIR. Asparagine 18 carries an N-linked (GlcNAc...) asparagine glycan. Residues 39-59 traverse the membrane as a helical segment; the sequence is VTVTFFLFLLSTTFNASFLLK. The Cytoplasmic segment spans residues 60-84; it reads LHKWTQKKENGKKLSKMKVLLKHLT. The chain crosses the membrane as a helical span at residues 85-105; the sequence is LANLLETLIVMPLDGMWNITV. Over 106 to 115 the chain is Extracellular; the sequence is QWYAGELLCK. A disulfide bridge links cysteine 114 with cysteine 196. A helical transmembrane segment spans residues 116–136; the sequence is VLSYLKLFSMYAPAFMMVVIS. The Cytoplasmic portion of the chain corresponds to 137-157; sequence LDRSLAITRPLAVKSNSKLGR. Residues 158–178 traverse the membrane as a helical segment; the sequence is SMIGLAWLLSSIFAGPQLYIF. At 179–208 the chain is on the extracellular side; sequence RMIHLADSSGQTEGFSQCVTHCSFPQWWHQ. Residues 209-229 traverse the membrane as a helical segment; that stretch reads AFYNFFTFSCLFIIPLLFMLI. Topologically, residues 230–271 are cytoplasmic; that stretch reads CNAKIIFTLTRVLHQDPHKLQLNQSKNNIPRARLRTLKMTVA. Residues 272-292 traverse the membrane as a helical segment; it reads FATSFTVCWTPYYVLGIWYWF. The Extracellular segment spans residues 293–306; that stretch reads DPEMLNRVSDPVNH. The helical transmembrane segment at 307–327 threads the bilayer; it reads FFFLFALLNPCFDPLIYGYFS. Leucine 328 is a topological domain (cytoplasmic).

This sequence belongs to the G-protein coupled receptor 1 family.

It localises to the cell membrane. Its function is as follows. Receptor for gonadotropin releasing hormone (GnRH) that mediates the action of GnRH to stimulate the secretion of the gonadotropic hormones luteinizing hormone (LH) and follicle-stimulating hormone (FSH). This receptor mediates its action by association with G-proteins that activate a phosphatidylinositol-calcium second messenger system. This chain is Gonadotropin-releasing hormone receptor (GNRHR), found in Equus caballus (Horse).